A 404-amino-acid polypeptide reads, in one-letter code: Glucose-1-phosphate adenylyltransferase (404 aa).

Residues tyrosine 99, glycine 164, 179-180 (EK), and serine 197 contribute to the alpha-D-glucose 1-phosphate site.

The protein belongs to the bacterial/plant glucose-1-phosphate adenylyltransferase family.

It catalyses the reaction alpha-D-glucose 1-phosphate + ATP + H(+) = ADP-alpha-D-glucose + diphosphate. It participates in capsule biogenesis; capsule polysaccharide biosynthesis. It functions in the pathway glycan biosynthesis; glycogen biosynthesis. Its function is as follows. Involved in the biosynthesis of ADP-glucose, a building block, required in the biosynthesis of maltose-1-phosphate (M1P) and in the elongation reactions to produce linear alpha-1,4-glucans. Catalyzes the reaction between ATP and alpha-D-glucose 1-phosphate (G1P) to produce pyrophosphate and ADP-Glc. This Mycobacterium leprae (strain Br4923) protein is Glucose-1-phosphate adenylyltransferase.